A 488-amino-acid polypeptide reads, in one-letter code: Glutamyl-tRNA(Gln) amidotransferase subunit A (488 aa).

Catalysis depends on charge relay system residues lysine 77 and serine 152. The active-site Acyl-ester intermediate is serine 176.

The protein belongs to the amidase family. GatA subfamily. As to quaternary structure, heterotrimer of A, B and C subunits.

The enzyme catalyses L-glutamyl-tRNA(Gln) + L-glutamine + ATP + H2O = L-glutaminyl-tRNA(Gln) + L-glutamate + ADP + phosphate + H(+). In terms of biological role, allows the formation of correctly charged Gln-tRNA(Gln) through the transamidation of misacylated Glu-tRNA(Gln) in organisms which lack glutaminyl-tRNA synthetase. The reaction takes place in the presence of glutamine and ATP through an activated gamma-phospho-Glu-tRNA(Gln). The protein is Glutamyl-tRNA(Gln) amidotransferase subunit A of Streptococcus pneumoniae (strain ATCC 700669 / Spain 23F-1).